We begin with the raw amino-acid sequence, 388 residues long: Chorismate synthase (388 aa).

The NADP(+) site is built by R39 and R45. FMN is bound by residues 130–132, 251–252, G296, 311–315, and R337; these read RSS, NA, and KPIPT.

The protein belongs to the chorismate synthase family. As to quaternary structure, homotetramer. FMNH2 is required as a cofactor.

The catalysed reaction is 5-O-(1-carboxyvinyl)-3-phosphoshikimate = chorismate + phosphate. It participates in metabolic intermediate biosynthesis; chorismate biosynthesis; chorismate from D-erythrose 4-phosphate and phosphoenolpyruvate: step 7/7. Catalyzes the anti-1,4-elimination of the C-3 phosphate and the C-6 proR hydrogen from 5-enolpyruvylshikimate-3-phosphate (EPSP) to yield chorismate, which is the branch point compound that serves as the starting substrate for the three terminal pathways of aromatic amino acid biosynthesis. This reaction introduces a second double bond into the aromatic ring system. This Lactococcus lactis subsp. lactis (strain IL1403) (Streptococcus lactis) protein is Chorismate synthase.